The following is a 237-amino-acid chain: Leucyl/phenylalanyl-tRNA--protein transferase (237 aa).

This sequence belongs to the L/F-transferase family.

It localises to the cytoplasm. It catalyses the reaction N-terminal L-lysyl-[protein] + L-leucyl-tRNA(Leu) = N-terminal L-leucyl-L-lysyl-[protein] + tRNA(Leu) + H(+). The enzyme catalyses N-terminal L-arginyl-[protein] + L-leucyl-tRNA(Leu) = N-terminal L-leucyl-L-arginyl-[protein] + tRNA(Leu) + H(+). It carries out the reaction L-phenylalanyl-tRNA(Phe) + an N-terminal L-alpha-aminoacyl-[protein] = an N-terminal L-phenylalanyl-L-alpha-aminoacyl-[protein] + tRNA(Phe). Functionally, functions in the N-end rule pathway of protein degradation where it conjugates Leu, Phe and, less efficiently, Met from aminoacyl-tRNAs to the N-termini of proteins containing an N-terminal arginine or lysine. The protein is Leucyl/phenylalanyl-tRNA--protein transferase of Photobacterium profundum (strain SS9).